The sequence spans 962 residues: Thrombospondin-3a (962 aa).

Positions Met-1–Ser-23 are cleaved as a signal peptide. The 173-residue stretch at Asp-24–Gly-196 folds into the Laminin G-like domain. The region spanning Pro-277–Gln-318 is the EGF-like 1 domain. 20 disulfides stabilise this stretch: Cys-281–Cys-292, Cys-286–Cys-303, Cys-306–Cys-317, Cys-323–Cys-335, Cys-329–Cys-344, Cys-347–Cys-371, Cys-377–Cys-390, Cys-384–Cys-399, Cys-402–Cys-414, Cys-420–Cys-434, Cys-428–Cys-444, Cys-446–Cys-457, Cys-473–Cys-480, Cys-485–Cys-505, Cys-521–Cys-541, Cys-544–Cys-564, Cys-580–Cys-600, Cys-603–Cys-623, Cys-641–Cys-661, and Cys-684–Cys-704. Asn-313 is a glycosylation site (N-linked (GlcNAc...) asparagine). Residues Asp-319–Gly-358 enclose the EGF-like 2; calcium-binding domain. The EGF-like 3; calcium-binding domain occupies Asp-373–Ala-412. Residue Asn-409 is glycosylated (N-linked (GlcNAc...) asparagine). Residues Pro-416–Gly-458 enclose the EGF-like 4 domain. TSP type-3 repeat units follow at residues Lys-459 to Gln-493, Glu-494 to Gln-529, Gln-530 to Gln-552, Lys-553 to Gln-588, Thr-589 to Gln-611, Thr-612 to Gln-649, Leu-650 to Gln-692, and Lys-693 to Leu-728. Residues Pro-548–Cys-704 are disordered. Over residues Ser-557–Gly-570 the composition is skewed to acidic residues. Basic and acidic residues predominate over residues Gly-631 to Cys-641. The N-linked (GlcNAc...) asparagine glycan is linked to Asn-646. Acidic residues predominate over residues Ser-652–Gly-669. Asn-710 carries N-linked (GlcNAc...) asparagine glycosylation. An intrachain disulfide couples Cys-720 to Cys-941. One can recognise a TSP C-terminal domain in the interval Arg-732 to Pro-946. Asn-942 carries N-linked (GlcNAc...) asparagine glycosylation.

This sequence belongs to the thrombospondin family. Oligomer; disulfide-linked.

Its function is as follows. Adhesive glycoprotein that mediates cell-to-cell and cell-to-matrix interactions. Can bind to fibrinogen, fibronectin, laminin and type V collagen. This is Thrombospondin-3a (thbs3a) from Danio rerio (Zebrafish).